We begin with the raw amino-acid sequence, 234 residues long: Interleukin-27 subunit alpha (234 aa).

The first 28 residues, 1 to 28 (MGQVTGDLGWRLSLLLLPLLLVQAGSWG), serve as a signal peptide directing secretion. N-linked (GlcNAc...) asparagine glycosylation occurs at asparagine 85. Positions 160-185 (KEEEDKEEEEEEEEEEKKLPLGALGG) are disordered. Acidic residues predominate over residues 161 to 174 (EEEDKEEEEEEEEE).

The protein belongs to the IL-6 superfamily. In terms of assembly, heterodimer with EBI3; not disulfide-linked. This heterodimer is known as interleukin IL-27. In terms of processing, O-glycosylated. As to expression, expressed in macrophages and dendritic cells.

Its subcellular location is the secreted. Its function is as follows. Associates with EBI3 to form the IL-27 interleukin, a heterodimeric cytokine which functions in innate immunity. IL-27 has pro- and anti-inflammatory properties, that can regulate T-helper cell development, suppress T-cell proliferation, stimulate cytotoxic T-cell activity, induce isotype switching in B-cells, and that has diverse effects on innate immune cells. Among its target cells are CD4 T-helper cells which can differentiate in type 1 effector cells (TH1), type 2 effector cells (TH2) and IL17 producing helper T-cells (TH17). It drives rapid clonal expansion of naive but not memory CD4 T-cells. It also strongly synergizes with IL-12 to trigger interferon-gamma/IFN-gamma production of naive CD4 T-cells, binds to the cytokine receptor WSX-1/TCCR which appears to be required but not sufficient for IL-27-mediated signal transduction. IL-27 potentiate the early phase of TH1 response and suppress TH2 and TH17 differentiation. It induces the differentiation of TH1 cells via two distinct pathways, p38 MAPK/TBX21- and ICAM1/ITGAL/ERK-dependent pathways. It also induces STAT1, STAT3, STAT4 and STAT5 phosphorylation and activates TBX21/T-Bet via STAT1 with resulting IL12RB2 up-regulation, an event crucial to TH1 cell commitment. It suppresses the expression of GATA3, the inhibitor TH1 cells development. In CD8 T-cells, it activates STATs as well as GZMB. IL-27 reveals to be a potent inhibitor of TH17 cell development and of IL-17 production. Indeed IL27 alone is also able to inhibit the production of IL17 by CD4 and CD8 T-cells. While IL-27 suppressed the development of pro-inflammatory Th17 cells via STAT1, it inhibits the development of anti-inflammatory inducible regulatory T-cells, iTreg, independently of STAT1. IL-27 also has an effect on cytokine production, it suppresses pro-inflammatory cytokine production such as IL2, IL4, IL5 and IL6 and activates suppressors of cytokine signaling such as SOCS1 and SOCS3. Apart from suppression of cytokine production, IL-27 also antagonizes the effects of some cytokines such as IL6 through direct effects on T-cells. Another important role of IL-27 is its antitumor activity as well as its antiangiogenic activity with activation of production of antiangiogenic chemokines such as IP-10/CXCL10 and MIG/CXCL9. This chain is Interleukin-27 subunit alpha (Il27), found in Mus musculus (Mouse).